Reading from the N-terminus, the 267-residue chain is Undecaprenyl-diphosphatase (267 aa).

Helical transmembrane passes span 1–21, 39–59, 83–103, 111–131, 144–164, 189–209, 218–238, and 246–266; these read MSYFEAFVLALIQGLTEFLPI, QGLAFDVAVHVGTLAAVVIYF, AKLAWMIVIATIPACIFGLVM, LRSAYVIATTTIIFGLLLWWV, AGWKKALFIGIAQALAMIPGT, FLMSIPIITLAGSYLGLKLVT, FLLTGIVTSFISAYLCIHLFL, and MTPFVIYRLILGVGLFAYLLM.

The protein belongs to the UppP family.

The protein localises to the cell inner membrane. It catalyses the reaction di-trans,octa-cis-undecaprenyl diphosphate + H2O = di-trans,octa-cis-undecaprenyl phosphate + phosphate + H(+). Its function is as follows. Catalyzes the dephosphorylation of undecaprenyl diphosphate (UPP). Confers resistance to bacitracin. In Vibrio vulnificus (strain CMCP6), this protein is Undecaprenyl-diphosphatase.